Consider the following 68-residue polypeptide: Alpha-conotoxin-like Lp1.2 (68 aa).

The first 21 residues, 1–21 (MGMRMMFTVFLLVVLATTVVS), serve as a signal peptide directing secretion. Positions 22–48 (FTSDRAFDGRNAAASDKASDLISLAVR) are excised as a propeptide. Cystine bridges form between C50-C56 and C51-C64. Residues 52 to 54 (SHP) form a ser-Xaa-Pro motif, crucial for potent interaction with nAChR region. C64 is subject to Cysteine amide. The propeptide occupies 65–68 (GGKR).

It belongs to the conotoxin A superfamily. As to expression, expressed by the venom duct.

The protein localises to the secreted. In terms of biological role, alpha-conotoxins act on postsynaptic membranes, they bind to the nicotinic acetylcholine receptors (nAChR) and thus inhibit them. The polypeptide is Alpha-conotoxin-like Lp1.2 (Conus leopardus (Leopard cone)).